The chain runs to 593 residues: PiggyBac transposable element-derived protein 3 (593 aa).

Disordered stretches follow at residues 27–53 and 69–105; these read IQPPENATAPVSDEESGDEEGGTINNL and SDAESDSDDPSYAPKDDSPDEVPSTFTVQQPPPSRRR. The span at 38 to 47 shows a compositional bias: acidic residues; the sequence is SDEESGDEEG. Ser86 is subject to Phosphoserine.

As to expression, expressed in heart and oocytes, but not in granulosa cells (at protein level).

The protein resides in the nucleus. Binds in vitro to PGBD3-related transposable elements, called MER85s; these non-autonomous 140 bp elements are characterized by the presence of PGBD3 terminal inverted repeats and the absence of internal transposase ORF. The polypeptide is PiggyBac transposable element-derived protein 3 (PGBD3) (Homo sapiens (Human)).